A 181-amino-acid chain; its full sequence is Acireductone dioxygenase 2 (181 aa).

Fe(2+) is bound by residues H97, H99, E103, and H141. Positions 97, 99, 103, and 141 each coordinate Ni(2+).

The protein belongs to the acireductone dioxygenase (ARD) family. As to quaternary structure, monomer. Fe(2+) is required as a cofactor. Ni(2+) serves as cofactor.

It catalyses the reaction 1,2-dihydroxy-5-(methylsulfanyl)pent-1-en-3-one + O2 = 3-(methylsulfanyl)propanoate + CO + formate + 2 H(+). The enzyme catalyses 1,2-dihydroxy-5-(methylsulfanyl)pent-1-en-3-one + O2 = 4-methylsulfanyl-2-oxobutanoate + formate + 2 H(+). Its pathway is amino-acid biosynthesis; L-methionine biosynthesis via salvage pathway; L-methionine from S-methyl-5-thio-alpha-D-ribose 1-phosphate: step 5/6. In terms of biological role, catalyzes 2 different reactions between oxygen and the acireductone 1,2-dihydroxy-3-keto-5-methylthiopentene (DHK-MTPene) depending upon the metal bound in the active site. Fe-containing acireductone dioxygenase (Fe-ARD) produces formate and 2-keto-4-methylthiobutyrate (KMTB), the alpha-ketoacid precursor of methionine in the methionine recycle pathway. Ni-containing acireductone dioxygenase (Ni-ARD) produces methylthiopropionate, carbon monoxide and formate, and does not lie on the methionine recycle pathway. The polypeptide is Acireductone dioxygenase 2 (Pectobacterium atrosepticum (strain SCRI 1043 / ATCC BAA-672) (Erwinia carotovora subsp. atroseptica)).